We begin with the raw amino-acid sequence, 165 residues long: NADPH-dependent 7-cyano-7-deazaguanine reductase (165 aa).

The active-site Thioimide intermediate is the Cys-56. Residue Asp-63 is the Proton donor of the active site. Substrate contacts are provided by residues 78–80 and 97–98; these read VES and HE.

Belongs to the GTP cyclohydrolase I family. QueF type 1 subfamily.

It localises to the cytoplasm. It carries out the reaction 7-aminomethyl-7-carbaguanine + 2 NADP(+) = 7-cyano-7-deazaguanine + 2 NADPH + 3 H(+). It participates in tRNA modification; tRNA-queuosine biosynthesis. Catalyzes the NADPH-dependent reduction of 7-cyano-7-deazaguanine (preQ0) to 7-aminomethyl-7-deazaguanine (preQ1). The chain is NADPH-dependent 7-cyano-7-deazaguanine reductase from Bacillus thuringiensis subsp. konkukian (strain 97-27).